A 634-amino-acid polypeptide reads, in one-letter code: Phosphatase and actin regulator 2 (634 aa).

Disordered regions lie at residues 1 to 32 (MDNA…KRKG), 84 to 344 (LPDQ…PLED), 412 to 471 (PQLL…ALAS), and 485 to 508 (NRPS…ERQE). D2 is lipidated: N-myristoyl glycine. The span at 13–26 (IANSDGPTAGSQTP) shows a compositional bias: polar residues. Phosphoserine is present on S16. Phosphothreonine is present on T25. The RPEL 1 repeat unit spans residues 60–85 (AVLERKISTRQSREELIRRGVLKELP). Composition is skewed to basic and acidic residues over residues 108-120 (ESTR…KSEE) and 137-147 (EDKKENTENHS). The span at 153–162 (PALPPSAPPK) shows a compositional bias: pro residues. Composition is skewed to low complexity over residues 231–247 (GSKA…SSRP) and 276–290 (TSHL…GTSD). Residues 291–304 (LKGEPAETRVESFK) show a composition bias toward basic and acidic residues. The span at 324–341 (VPPPPVAPAPSPLAPPLP) shows a compositional bias: pro residues. S423 is modified (phosphoserine). The segment covering 452–464 (TDDEDEDEDEDGS) has biased composition (acidic residues). 3 RPEL repeats span residues 477 to 502 (DTLA…QRTS), 515 to 540 (TKLV…KQKN), and 553 to 578 (RRLS…RFNE). A compositionally biased stretch (basic and acidic residues) spans 488-508 (SKKELEDKNILQRTSEEERQE). Residues S522 and S560 each carry the phosphoserine modification.

The protein belongs to the phosphatase and actin regulator family. As to quaternary structure, binds PPP1CA and actin.

It is found in the membrane. The sequence is that of Phosphatase and actin regulator 2 (PHACTR2) from Homo sapiens (Human).